Here is a 94-residue protein sequence, read N- to C-terminus: Pyrimidine/purine nucleoside phosphorylase (94 aa).

This sequence belongs to the nucleoside phosphorylase PpnP family.

It catalyses the reaction a purine D-ribonucleoside + phosphate = a purine nucleobase + alpha-D-ribose 1-phosphate. The enzyme catalyses adenosine + phosphate = alpha-D-ribose 1-phosphate + adenine. It carries out the reaction cytidine + phosphate = cytosine + alpha-D-ribose 1-phosphate. The catalysed reaction is guanosine + phosphate = alpha-D-ribose 1-phosphate + guanine. It catalyses the reaction inosine + phosphate = alpha-D-ribose 1-phosphate + hypoxanthine. The enzyme catalyses thymidine + phosphate = 2-deoxy-alpha-D-ribose 1-phosphate + thymine. It carries out the reaction uridine + phosphate = alpha-D-ribose 1-phosphate + uracil. The catalysed reaction is xanthosine + phosphate = alpha-D-ribose 1-phosphate + xanthine. Its function is as follows. Catalyzes the phosphorolysis of diverse nucleosides, yielding D-ribose 1-phosphate and the respective free bases. Can use uridine, adenosine, guanosine, cytidine, thymidine, inosine and xanthosine as substrates. Also catalyzes the reverse reactions. The polypeptide is Pyrimidine/purine nucleoside phosphorylase (Escherichia fergusonii (strain ATCC 35469 / DSM 13698 / CCUG 18766 / IAM 14443 / JCM 21226 / LMG 7866 / NBRC 102419 / NCTC 12128 / CDC 0568-73)).